The sequence spans 226 residues: Small ribosomal subunit protein uS3 (226 aa).

The region spanning 39 to 107 (IRKFIKNKLY…NILINITEIK (69 aa)) is the KH type-2 domain.

It belongs to the universal ribosomal protein uS3 family. As to quaternary structure, part of the 30S ribosomal subunit. Forms a tight complex with proteins S10 and S14.

Functionally, binds the lower part of the 30S subunit head. Binds mRNA in the 70S ribosome, positioning it for translation. This is Small ribosomal subunit protein uS3 from Acetivibrio thermocellus (strain ATCC 27405 / DSM 1237 / JCM 9322 / NBRC 103400 / NCIMB 10682 / NRRL B-4536 / VPI 7372) (Clostridium thermocellum).